The following is a 318-amino-acid chain: Methionyl-tRNA formyltransferase (318 aa).

112 to 115 (SILP) lines the (6S)-5,6,7,8-tetrahydrofolate pocket.

Belongs to the Fmt family.

It catalyses the reaction L-methionyl-tRNA(fMet) + (6R)-10-formyltetrahydrofolate = N-formyl-L-methionyl-tRNA(fMet) + (6S)-5,6,7,8-tetrahydrofolate + H(+). In terms of biological role, attaches a formyl group to the free amino group of methionyl-tRNA(fMet). The formyl group appears to play a dual role in the initiator identity of N-formylmethionyl-tRNA by promoting its recognition by IF2 and preventing the misappropriation of this tRNA by the elongation apparatus. The sequence is that of Methionyl-tRNA formyltransferase from Shewanella sp. (strain MR-7).